A 308-amino-acid chain; its full sequence is Ribosomal RNA large subunit methyltransferase F (308 aa).

This sequence belongs to the methyltransferase superfamily. METTL16/RlmF family.

The protein resides in the cytoplasm. The catalysed reaction is adenosine(1618) in 23S rRNA + S-adenosyl-L-methionine = N(6)-methyladenosine(1618) in 23S rRNA + S-adenosyl-L-homocysteine + H(+). In terms of biological role, specifically methylates the adenine in position 1618 of 23S rRNA. The protein is Ribosomal RNA large subunit methyltransferase F of Escherichia coli O17:K52:H18 (strain UMN026 / ExPEC).